The chain runs to 347 residues: (RS)-norcoclaurine 6-O-methyltransferase (347 aa).

S-adenosyl-L-methionine is bound by residues glycine 192, aspartate 215, aspartate 235, methionine 236, and lysine 249. The Proton acceptor role is filled by histidine 253.

This sequence belongs to the class I-like SAM-binding methyltransferase superfamily. Cation-independent O-methyltransferase family. COMT subfamily. In terms of assembly, homodimer.

The enzyme catalyses norcoclaurine + S-adenosyl-L-methionine = coclaurine + S-adenosyl-L-homocysteine + H(+). Its pathway is alkaloid biosynthesis; (S)-reticuline biosynthesis; (S)-reticuline from (S)-norcoclaurine: step 1/4. In terms of biological role, catalyzes the transfer of the S-methyl group of S-adenosyl-L-methionine (AdoMet) to the 6-hydroxyl group of norcoclaurine to form coclaurine. This is (RS)-norcoclaurine 6-O-methyltransferase from Coptis japonica (Japanese goldthread).